The sequence spans 136 residues: MAKKKIVIGVIGSDCHTVGNKIIHNKLEESGFDVVNIGALSPQIDFINAALETNSDAIIVSSIYGYGELDCQGIREKCNEYGLKDILLYIGGNIGSSNEKWENTEKRFKEMGFDRIYKPGTPIEETIIDLKKDFKI.

The B12-binding domain maps to 3–136 (KKKIVIGVIG…IIDLKKDFKI (134 aa)). Residues 13 to 17 (SDCHT), H16, and 61 to 63 (SSI) contribute to the adenosylcob(III)alamin site.

The protein belongs to the methylaspartate mutase GlmS subunit family. Heterotetramer composed of 2 epsilon subunits (GlmE) and 2 sigma subunits (GlmS). GlmE exists as a homodimer and GlmS as a monomer. It depends on adenosylcob(III)alamin as a cofactor.

It catalyses the reaction (2S,3S)-3-methyl-L-aspartate = L-glutamate. It participates in amino-acid degradation; L-glutamate degradation via mesaconate pathway; acetate and pyruvate from L-glutamate: step 1/4. In terms of biological role, catalyzes the carbon skeleton rearrangement of L-glutamate to L-threo-3-methylaspartate ((2S,3S)-3-methylaspartate). The sequence is that of Glutamate mutase sigma subunit from Fusobacterium nucleatum subsp. nucleatum (strain ATCC 25586 / DSM 15643 / BCRC 10681 / CIP 101130 / JCM 8532 / KCTC 2640 / LMG 13131 / VPI 4355).